We begin with the raw amino-acid sequence, 346 residues long: Flap endonuclease 1 (346 aa).

Positions 1–100 (MGVDIKELVE…KELERRYQIK (100 aa)) are N-domain. Mg(2+) contacts are provided by aspartate 29, aspartate 82, glutamate 154, glutamate 156, aspartate 175, aspartate 177, and aspartate 238. The segment at 118-260 (EARIYAQQTS…KALKLVKELK (143 aa)) is I-domain. Residues 336–344 (KQQSLESWF) form an interaction with PCNA region.

It belongs to the XPG/RAD2 endonuclease family. FEN1 subfamily. As to quaternary structure, interacts with PCNA. PCNA stimulates the nuclease activity without altering cleavage specificity. Mg(2+) serves as cofactor.

Functionally, structure-specific nuclease with 5'-flap endonuclease and 5'-3' exonuclease activities involved in DNA replication and repair. During DNA replication, cleaves the 5'-overhanging flap structure that is generated by displacement synthesis when DNA polymerase encounters the 5'-end of a downstream Okazaki fragment. Binds the unpaired 3'-DNA end and kinks the DNA to facilitate 5' cleavage specificity. Cleaves one nucleotide into the double-stranded DNA from the junction in flap DNA, leaving a nick for ligation. Also involved in the base excision repair (BER) pathway. Acts as a genome stabilization factor that prevents flaps from equilibrating into structures that lead to duplications and deletions. Also possesses 5'-3' exonuclease activity on nicked or gapped double-stranded DNA. This Thermofilum pendens (strain DSM 2475 / Hrk 5) protein is Flap endonuclease 1.